The chain runs to 154 residues: Jupiter microtubule associated homolog 1 (154 aa).

An N-acetylmethionine modification is found at methionine 1. A compositionally biased stretch (polar residues) spans 1-19 (MTTTTTFKGVDPNSRNSSR). The interval 1 to 154 (MTTTTTFKGV…PGGKSSLVLG (154 aa)) is disordered. Position 2 is an N-acetylthreonine; in Hematological and neurological expressed 1 protein, N-terminally processed (threonine 2). Serine 28 and serine 31 each carry phosphoserine. Residue threonine 54 is modified to Phosphothreonine. Residues serine 71, serine 80, serine 87, serine 88, and serine 92 each carry the phosphoserine modification. Positions 80-91 (SGPQRRNSSEAN) are enriched in polar residues. Residues 96-108 (LDLKGEGDVHENV) are compositionally biased toward basic and acidic residues. Pro residues predominate over residues 125–138 (PAAPVPSPVAPAPV). At serine 131 the chain carries Phosphoserine. Lysine 148 is subject to N6-acetyllysine.

The protein belongs to the JUPITER family. As to quaternary structure, interacts with the complex composed, at least, of APC, CTNNB1 and GSK3B; the interaction takes place with the inactive form of GSK3B (phosphorylated at 'Ser-9').

It localises to the nucleus. The protein localises to the cytoplasm. Modulates negatively AKT-mediated GSK3B signaling. Induces CTNNB1 'Ser-33' phosphorylation and degradation through the suppression of the inhibitory 'Ser-9' phosphorylation of GSK3B, which represses the function of the APC:CTNNB1:GSK3B complex and the interaction with CDH1/E-cadherin in adherent junctions. Plays a role in the regulation of cell cycle and cell adhesion. Has an inhibitory role on AR-signaling pathway through the induction of receptor proteasomal degradation. The protein is Jupiter microtubule associated homolog 1 of Bos taurus (Bovine).